Consider the following 227-residue polypeptide: Ribose-5-phosphate isomerase A (227 aa).

Residues 26 to 29, 82 to 85, and 95 to 98 each bind substrate; these read TGST, DGAD, and KGGG. E104 acts as the Proton acceptor in catalysis. Residue K122 coordinates substrate.

The protein belongs to the ribose 5-phosphate isomerase family. As to quaternary structure, homodimer.

The enzyme catalyses aldehydo-D-ribose 5-phosphate = D-ribulose 5-phosphate. It participates in carbohydrate degradation; pentose phosphate pathway; D-ribose 5-phosphate from D-ribulose 5-phosphate (non-oxidative stage): step 1/1. Catalyzes the reversible conversion of ribose-5-phosphate to ribulose 5-phosphate. This Streptococcus pyogenes serotype M2 (strain MGAS10270) protein is Ribose-5-phosphate isomerase A.